A 341-amino-acid polypeptide reads, in one-letter code: S-adenosylmethionine:tRNA ribosyltransferase-isomerase (341 aa).

This sequence belongs to the QueA family. As to quaternary structure, monomer.

Its subcellular location is the cytoplasm. It carries out the reaction 7-aminomethyl-7-carbaguanosine(34) in tRNA + S-adenosyl-L-methionine = epoxyqueuosine(34) in tRNA + adenine + L-methionine + 2 H(+). It participates in tRNA modification; tRNA-queuosine biosynthesis. Transfers and isomerizes the ribose moiety from AdoMet to the 7-aminomethyl group of 7-deazaguanine (preQ1-tRNA) to give epoxyqueuosine (oQ-tRNA). The sequence is that of S-adenosylmethionine:tRNA ribosyltransferase-isomerase from Clostridium tetani (strain Massachusetts / E88).